The chain runs to 620 residues: MPVLQKRINKDTFGEILERVSSRMSGWREKTLSFAGRLTLTKAVLSSMPVHSMSTILLPQSILNRLDQLSRTFLWGSTAEKKKQHLVKWSKVCSPKKEGGLGVRAAKSMNRALISKVGWRLLQEKNSLWTLVLQKKYHVGEIRDSRWLIPKGSWSSTWRSIAIGLRDVVSHGVGWIPGDGQQIRFWTDRWVSGKPLLELDNGERPTDCDTVVAKDLWIPGRGWDFAKIDPYTTNNTRLELRAVVLDLVTGARDRLSWKFSQDGQFSVRSAYEMLTVDEVPRPNMASFFNCLWKVRVPERVKTFLWLVGNQAVMTEEERHRRHLSASNVCQVCKGGVESMLHVLRDCPAQLGIWVRVVPQRRQQGFFSKSLFEWLYDNLGDRSGCEDIPWSTIFAVIIWWGWKWRCGNIFGENTKCRDRVKFVKEWAVEVYRAHSGNVLVGITQPRVERMIGWVSPCVGWVKVNTDGASRGNPGLASAGGVLRDCTGAWCGGFSLNIGRCSAPQAELWGVYYGLYFAWEKKVPRVELEVDSEVIVGFLKTGISDSHPLSFLVRLCHGFLQKDWLVRIVHVYREANRLADGLANYAFSLSLGFHSFDLVPDAMSSLLREDTLGSTRPRRVRL.

The RNase H type-1 domain maps to Cys-456–Ser-586. Positions 465, 505, 529, and 578 each coordinate Mg(2+).

Mg(2+) serves as cofactor.

The catalysed reaction is Endonucleolytic cleavage to 5'-phosphomonoester.. The protein is Putative ribonuclease H protein At1g65750 of Arabidopsis thaliana (Mouse-ear cress).